Reading from the N-terminus, the 462-residue chain is Cysteine--tRNA ligase (462 aa).

Residue Cys28 participates in Zn(2+) binding. The 'HIGH' region motif lies at Met30 to His40. Residues Cys209, His234, and Glu238 each contribute to the Zn(2+) site. The short motif at Lys266–Ser270 is the 'KMSKS' region element. Lys269 contributes to the ATP binding site.

It belongs to the class-I aminoacyl-tRNA synthetase family. As to quaternary structure, monomer. Zn(2+) is required as a cofactor.

It localises to the cytoplasm. The catalysed reaction is tRNA(Cys) + L-cysteine + ATP = L-cysteinyl-tRNA(Cys) + AMP + diphosphate. The sequence is that of Cysteine--tRNA ligase from Pseudomonas fluorescens (strain SBW25).